The following is a 233-amino-acid chain: MSNLSNLRHKLQNGLIASCQPVPGSAMDTPEIVAAMACAALAGGAVGLRIEGISNIRAVRRATDAPIIGIIKRDLPDSEVRITPWLEDIDALSAAGADIIAFDVTCRERPVSVADLYQRARATGCLTMADASNIDDGLLAHHLGIDFIGTTLSGYTQAIVPTEPDLALVTQLAQAGCRVIAEGRYHSPALAAAAISAGAYAVTVGSAITRIEHICGWFCDAIKQCETEKLTEY.

The protein belongs to the NanE family.

The catalysed reaction is an N-acyl-D-glucosamine 6-phosphate = an N-acyl-D-mannosamine 6-phosphate. It functions in the pathway amino-sugar metabolism; N-acetylneuraminate degradation; D-fructose 6-phosphate from N-acetylneuraminate: step 3/5. In terms of biological role, converts N-acetylmannosamine-6-phosphate (ManNAc-6-P) to N-acetylglucosamine-6-phosphate (GlcNAc-6-P). The polypeptide is Putative N-acetylmannosamine-6-phosphate 2-epimerase (Yersinia pseudotuberculosis serotype O:1b (strain IP 31758)).